The primary structure comprises 338 residues: RNA 3'-terminal phosphate cyclase (338 aa).

Residues Gln103 and 283–287 each bind ATP; that span reads YLADQ. The Tele-AMP-histidine intermediate role is filled by His308.

Belongs to the RNA 3'-terminal cyclase family. Type 1 subfamily.

It is found in the cytoplasm. It catalyses the reaction a 3'-end 3'-phospho-ribonucleotide-RNA + ATP = a 3'-end 2',3'-cyclophospho-ribonucleotide-RNA + AMP + diphosphate. Functionally, catalyzes the conversion of 3'-phosphate to a 2',3'-cyclic phosphodiester at the end of RNA. The mechanism of action of the enzyme occurs in 3 steps: (A) adenylation of the enzyme by ATP; (B) transfer of adenylate to an RNA-N3'P to produce RNA-N3'PP5'A; (C) and attack of the adjacent 2'-hydroxyl on the 3'-phosphorus in the diester linkage to produce the cyclic end product. The biological role of this enzyme is unknown but it is likely to function in some aspects of cellular RNA processing. This is RNA 3'-terminal phosphate cyclase from Shigella boydii serotype 18 (strain CDC 3083-94 / BS512).